We begin with the raw amino-acid sequence, 104 residues long: Large ribosomal subunit protein uL24 (104 aa).

The protein belongs to the universal ribosomal protein uL24 family. In terms of assembly, part of the 50S ribosomal subunit.

Its function is as follows. One of two assembly initiator proteins, it binds directly to the 5'-end of the 23S rRNA, where it nucleates assembly of the 50S subunit. Functionally, one of the proteins that surrounds the polypeptide exit tunnel on the outside of the subunit. The chain is Large ribosomal subunit protein uL24 from Pseudomonas fluorescens (strain ATCC BAA-477 / NRRL B-23932 / Pf-5).